A 132-amino-acid chain; its full sequence is MMNDIIADALTRIRNAAMRRLEVATLLHSNTVVGVLNVLLQKEYIAGFKVIDGQNNKKTIQVELKYDDNEKSVINEITRVSKPGRRVYKSASEIKNFKNGYGTIIVSTNKGVIANDEAYAANVGGEVLCTVW.

The protein belongs to the universal ribosomal protein uS8 family. In terms of assembly, part of the 30S ribosomal subunit. Contacts proteins S5 and S12.

Its function is as follows. One of the primary rRNA binding proteins, it binds directly to 16S rRNA central domain where it helps coordinate assembly of the platform of the 30S subunit. This Aliarcobacter butzleri (strain RM4018) (Arcobacter butzleri) protein is Small ribosomal subunit protein uS8.